A 60-amino-acid chain; its full sequence is Large ribosomal subunit protein bL32 (60 aa).

Residues 1–23 (MAKHPVPKKKTSKSKRDMRRSHH) show a composition bias toward basic residues. A disordered region spans residues 1–26 (MAKHPVPKKKTSKSKRDMRRSHHALT).

Belongs to the bacterial ribosomal protein bL32 family.

The protein is Large ribosomal subunit protein bL32 of Deinococcus deserti (strain DSM 17065 / CIP 109153 / LMG 22923 / VCD115).